The following is a 155-amino-acid chain: Small ribosomal subunit protein bS6 (155 aa).

The segment at 94–155 (EKHEEGPSAM…RPRRPREDRV (62 aa)) is disordered.

This sequence belongs to the bacterial ribosomal protein bS6 family.

Its function is as follows. Binds together with bS18 to 16S ribosomal RNA. The protein is Small ribosomal subunit protein bS6 of Rhizobium leguminosarum bv. trifolii (strain WSM2304).